A 356-amino-acid polypeptide reads, in one-letter code: tRNA N6-adenosine threonylcarbamoyltransferase (356 aa).

Residues H115 and H119 each contribute to the Fe cation site. Substrate-binding positions include 138-142 (LVSGG), D171, G184, and N283. D311 serves as a coordination point for Fe cation.

This sequence belongs to the KAE1 / TsaD family. Fe(2+) is required as a cofactor.

The protein localises to the cytoplasm. It catalyses the reaction L-threonylcarbamoyladenylate + adenosine(37) in tRNA = N(6)-L-threonylcarbamoyladenosine(37) in tRNA + AMP + H(+). Functionally, required for the formation of a threonylcarbamoyl group on adenosine at position 37 (t(6)A37) in tRNAs that read codons beginning with adenine. Is involved in the transfer of the threonylcarbamoyl moiety of threonylcarbamoyl-AMP (TC-AMP) to the N6 group of A37, together with TsaE and TsaB. TsaD likely plays a direct catalytic role in this reaction. The polypeptide is tRNA N6-adenosine threonylcarbamoyltransferase (Prochlorococcus marinus (strain MIT 9215)).